A 131-amino-acid chain; its full sequence is MATRHQVRQAIVSLLYSNEINPVTAEFEDEFLEEKKIRNERKNEAQQTFKEVLANKEKLDEILKPHLKDGDFSKVGATELAILRLGLYEMKFSQTDKAVIINEAIELAKELGSDQAPKFINGVLDKIKGDL.

The protein belongs to the NusB family.

In terms of biological role, involved in transcription antitermination. Required for transcription of ribosomal RNA (rRNA) genes. Binds specifically to the boxA antiterminator sequence of the ribosomal RNA (rrn) operons. The polypeptide is Transcription antitermination protein NusB (Campylobacter concisus (strain 13826)).